Reading from the N-terminus, the 872-residue chain is N-acetyltransferase eso1 (872 aa).

Residues 1–591 (MELGKSKFSW…KQVKPKTYGR (591 aa)) form a polymerase type-Y region. Residues 29–285 (VAHIDQDAFY…LKITDIRMLG (257 aa)) form the UmuC domain. The UBZ3-type zinc-finger motif lies at 533-567 (SADETYTCEECEQKITLSERNEHEDYHIALSISRK). C540, C543, H555, and H559 together coordinate Zn(2+). The disordered stretch occupies residues 569–602 (RYNNLVPPSHDKPKQVKPKTYGRKTGSKHYAPLS). Over residues 583–595 (QVKPKTYGRKTGS) the composition is skewed to basic residues. Residues 592 to 872 (KTGSKHYAPL…KSLRYAVYES (281 aa)) form an acetyltransferase region. A CCHH-type zinc finger spans residues 653 to 677 (VTCSECSMEYNSTSEEDILLHSRFH).

It in the C-terminal section; belongs to the acetyltransferase family. ECO subfamily. The protein in the N-terminal section; belongs to the DNA polymerase type-Y family. In terms of assembly, interacts with pds5.

Its subcellular location is the nucleus. Functionally, probable acetyltransferase required for the establishment of sister chromatid cohesion and couple the processes of cohesion and DNA replication to ensure that only sister chromatids become paired together. In contrast to the structural cohesins, the deposition and establishment factors are required only during S phase. The relevance of acetyltransferase function remains unclear. This is N-acetyltransferase eso1 (eso1) from Schizosaccharomyces pombe (strain 972 / ATCC 24843) (Fission yeast).